The primary structure comprises 242 residues: Probable 2-phosphosulfolactate phosphatase (242 aa).

The protein belongs to the ComB family. It depends on Mg(2+) as a cofactor.

The enzyme catalyses (2R)-O-phospho-3-sulfolactate + H2O = (2R)-3-sulfolactate + phosphate. This Synechococcus sp. (strain JA-2-3B'a(2-13)) (Cyanobacteria bacterium Yellowstone B-Prime) protein is Probable 2-phosphosulfolactate phosphatase.